The sequence spans 689 residues: Glycine--tRNA ligase beta subunit (689 aa).

Belongs to the class-II aminoacyl-tRNA synthetase family. As to quaternary structure, tetramer of two alpha and two beta subunits.

The protein localises to the cytoplasm. The enzyme catalyses tRNA(Gly) + glycine + ATP = glycyl-tRNA(Gly) + AMP + diphosphate. In Erwinia tasmaniensis (strain DSM 17950 / CFBP 7177 / CIP 109463 / NCPPB 4357 / Et1/99), this protein is Glycine--tRNA ligase beta subunit.